The chain runs to 323 residues: Probable cell division protein WhiA (323 aa).

Positions 275–309 (TLKELGEMLTTGQVSKSGINHRLRKLDQIAERLRS) form a DNA-binding region, H-T-H motif.

Belongs to the WhiA family.

Functionally, involved in cell division and chromosome segregation. In Listeria innocua serovar 6a (strain ATCC BAA-680 / CLIP 11262), this protein is Probable cell division protein WhiA.